We begin with the raw amino-acid sequence, 98 residues long: Small ribosomal subunit protein bTHXm (98 aa).

The N-terminal 35 residues, 1-35 (MAAMQWCGAMTRRIMMTQRTSAALNCSARYSSLSP), are a transit peptide targeting the mitochondrion. Residues 52–71 (DKKTKKGKRFKGSYGNSRGK) form a disordered region. Basic residues predominate over residues 53-62 (KKTKKGKRFK).

It belongs to the bacterial ribosomal protein bTHX family. In terms of assembly, component of the mitochondrial ribosome small subunit.

Its subcellular location is the mitochondrion. The sequence is that of Small ribosomal subunit protein bTHXm from Arabidopsis thaliana (Mouse-ear cress).